The chain runs to 342 residues: Glucokinase (342 aa).

ATP is bound at residue 7 to 12 (GDIGGT).

The protein belongs to the bacterial glucokinase family.

The protein resides in the cytoplasm. It carries out the reaction D-glucose + ATP = D-glucose 6-phosphate + ADP + H(+). The protein is Glucokinase of Trichormus variabilis (strain ATCC 29413 / PCC 7937) (Anabaena variabilis).